We begin with the raw amino-acid sequence, 195 residues long: Cysteine/O-acetylserine efflux protein (195 aa).

Residues 1–9 (MTPMLLSAF) are Periplasmic-facing. The chain crosses the membrane as a helical span at residues 10–32 (WTYTLITALTPGPNNILALSAAT). Over 33–46 (AHGFRQSIRVLAGM) the chain is Cytoplasmic. The helical transmembrane segment at 47 to 67 (SLGFLVVMLLCAGIAFSLAVI) threads the bilayer. The Periplasmic portion of the chain corresponds to 68–69 (DP). Residues 70-90 (AIIHLLSWVGAAYILWLAWKI) form a helical membrane-spanning segment. Over 91-104 (ATSPAADENARPKP) the chain is Cytoplasmic. Residues 105 to 125 (VGFWVSFGLQFVNVKIILYGI) form a helical membrane-spanning segment. Topologically, residues 126–141 (TALSTFVLPQTQALNW) are periplasmic. The chain crosses the membrane as a helical span at residues 142–162 (VIGVSILLALIGTFGNVCWAL). The Cytoplasmic portion of the chain corresponds to 163 to 176 (AGHLFQRAFRHYGR). Residues 177-194 (QLNIILALLLVYCAVRIF) traverse the membrane as a helical segment. A topological domain (periplasmic) is located at residue tyrosine 195.

Belongs to the Rht family.

Its subcellular location is the cell inner membrane. It catalyses the reaction O-acetyl-L-serine(in) = O-acetyl-L-serine(out). It carries out the reaction L-cysteine(in) = L-cysteine(out). In terms of biological role, exporter of O-acetylserine (OAS) and cysteine. The protein is Cysteine/O-acetylserine efflux protein (eamB) of Salmonella choleraesuis (strain SC-B67).